Reading from the N-terminus, the 462-residue chain is Siroheme synthase (462 aa).

Positions Met1–Leu201 are precorrin-2 dehydrogenase /sirohydrochlorin ferrochelatase. NAD(+)-binding positions include Glu22 to Val23 and Pro43 to Glu44. Ser126 carries the phosphoserine modification. Residues Gly214–Leu462 form a uroporphyrinogen-III C-methyltransferase region. Pro223 serves as a coordination point for S-adenosyl-L-methionine. Asp246 serves as the catalytic Proton acceptor. Residue Lys268 is the Proton donor of the active site. Residues Gly299–Asp301, Ile304, Thr329–Ala330, Met381, and Gly410 contribute to the S-adenosyl-L-methionine site.

It in the N-terminal section; belongs to the precorrin-2 dehydrogenase / sirohydrochlorin ferrochelatase family. This sequence in the C-terminal section; belongs to the precorrin methyltransferase family.

It catalyses the reaction uroporphyrinogen III + 2 S-adenosyl-L-methionine = precorrin-2 + 2 S-adenosyl-L-homocysteine + H(+). The enzyme catalyses precorrin-2 + NAD(+) = sirohydrochlorin + NADH + 2 H(+). The catalysed reaction is siroheme + 2 H(+) = sirohydrochlorin + Fe(2+). It functions in the pathway cofactor biosynthesis; adenosylcobalamin biosynthesis; precorrin-2 from uroporphyrinogen III: step 1/1. Its pathway is cofactor biosynthesis; adenosylcobalamin biosynthesis; sirohydrochlorin from precorrin-2: step 1/1. It participates in porphyrin-containing compound metabolism; siroheme biosynthesis; precorrin-2 from uroporphyrinogen III: step 1/1. The protein operates within porphyrin-containing compound metabolism; siroheme biosynthesis; siroheme from sirohydrochlorin: step 1/1. It functions in the pathway porphyrin-containing compound metabolism; siroheme biosynthesis; sirohydrochlorin from precorrin-2: step 1/1. Multifunctional enzyme that catalyzes the SAM-dependent methylations of uroporphyrinogen III at position C-2 and C-7 to form precorrin-2 via precorrin-1. Then it catalyzes the NAD-dependent ring dehydrogenation of precorrin-2 to yield sirohydrochlorin. Finally, it catalyzes the ferrochelation of sirohydrochlorin to yield siroheme. The sequence is that of Siroheme synthase from Ectopseudomonas mendocina (strain ymp) (Pseudomonas mendocina).